Here is a 357-residue protein sequence, read N- to C-terminus: MRALKKIINLNALRHNWALIKQRSLPATPMVVLKADAYGHGMTTVAKTLDDARYFAVSCIEEAIALRHLGIDTPVVLLEGVYRADELLLCEYYQFDTLVHNFRQMQWLKEFNGSVKAWLKVDSGMHRLGFTQDEIAEAFAQAHSLPVNIQWQGVITHFACSDEDDLTHAKKQLACMDRLVLPAHWKRCYANSAAIFALPQAHYDYTRSGIMLYGLSPFMHGDGSAYGLQPVMTVITEILAVRHLEKNETAGYGQGFTAPESGWLATIALGYGDGFARTITSGAVPVLIAGQRYPLVGRVAMDMAMVWLGSDRYAEGTIVELFGSHLPTEEVARAAGTIPHTLTTMLMPRVHVEIVGG.

The Proton acceptor; specific for D-alanine role is filled by K34. N6-(pyridoxal phosphate)lysine is present on K34. R127 provides a ligand contact to substrate. The active-site Proton acceptor; specific for L-alanine is Y252. M301 contacts substrate.

The protein belongs to the alanine racemase family. It depends on pyridoxal 5'-phosphate as a cofactor.

The enzyme catalyses L-alanine = D-alanine. It functions in the pathway amino-acid biosynthesis; D-alanine biosynthesis; D-alanine from L-alanine: step 1/1. Functionally, catalyzes the interconversion of L-alanine and D-alanine. May also act on other amino acids. This is Alanine racemase (alr) from Dichelobacter nodosus (strain VCS1703A).